Reading from the N-terminus, the 380-residue chain is MRIGIVAGELSGDQLGGTLVEALKQKYPNAIIEGIGGPKMAAAGFKSLYPMDALSLIGFLEIISKGLRILSIRRKIINYFKQNKPDIFIGIDAPDFNLTVEKELRSVGIKTIHYVSPKIWVWREYRIKKIRKATDKILAILPFETEYYKNRHKFEAIYVGHPLAKNIPIHIDRTKYRDKLGLKGNSLPILSVLPGSRTTEVSRLLPLFLLALQKLVDAGYKFKAIMPLAKPSLKPLFAKYKEQIDSLGIEVFETNSHDVLKASDLSLLASGTATLEAMLCKLPMVVGYKLSWLSALIGRMLIGNHSYWAFPNILHKSEIIKELIQEDCTVDNLFSELKRLFDDKQRNDYIVEEFEKIHKEMVIDTESKIIQVLNTMIEKS.

The protein belongs to the LpxB family.

The enzyme catalyses a lipid X + a UDP-2-N,3-O-bis[(3R)-3-hydroxyacyl]-alpha-D-glucosamine = a lipid A disaccharide + UDP + H(+). It functions in the pathway bacterial outer membrane biogenesis; LPS lipid A biosynthesis. In terms of biological role, condensation of UDP-2,3-diacylglucosamine and 2,3-diacylglucosamine-1-phosphate to form lipid A disaccharide, a precursor of lipid A, a phosphorylated glycolipid that anchors the lipopolysaccharide to the outer membrane of the cell. In Francisella tularensis subsp. novicida (strain U112), this protein is Lipid-A-disaccharide synthase.